A 175-amino-acid chain; its full sequence is Electron transport protein HydN (175 aa).

4Fe-4S ferredoxin-type domains are found at residues Asn2–Cys32, Lys48–Lys79, Gly80–Arg109, and Asp124–Arg157. 16 residues coordinate [4Fe-4S] cluster: Cys12, Cys15, Cys18, Cys22, Cys58, Cys61, Cys66, Cys70, Cys89, Cys92, Cys95, Cys99, Cys131, Cys134, Cys143, and Cys147.

[4Fe-4S] cluster is required as a cofactor.

Its function is as follows. Electron transport from formate to hydrogen. The polypeptide is Electron transport protein HydN (hydN) (Escherichia coli O157:H7).